The following is a 395-amino-acid chain: Putative 8-amino-7-oxononanoate synthase (395 aa).

Arg-23 is a binding site for substrate. A pyridoxal 5'-phosphate-binding site is contributed by 110-111; sequence GY. His-135 contacts substrate. Pyridoxal 5'-phosphate contacts are provided by residues Ser-182, 207-210, and 239-242; these read DEAH and TFSK. N6-(pyridoxal phosphate)lysine is present on Lys-242. Thr-356 lines the substrate pocket.

Belongs to the class-II pyridoxal-phosphate-dependent aminotransferase family. BioF subfamily. Homodimer. Requires pyridoxal 5'-phosphate as cofactor.

The catalysed reaction is 6-carboxyhexanoyl-[ACP] + L-alanine + H(+) = (8S)-8-amino-7-oxononanoate + holo-[ACP] + CO2. The protein operates within cofactor biosynthesis; biotin biosynthesis. Its function is as follows. Catalyzes the decarboxylative condensation of pimeloyl-[acyl-carrier protein] and L-alanine to produce 8-amino-7-oxononanoate (AON), [acyl-carrier protein], and carbon dioxide. This Bacillus cereus (strain ATCC 10987 / NRS 248) protein is Putative 8-amino-7-oxononanoate synthase (bioF).